The primary structure comprises 418 residues: Tyrosine--tRNA ligase (418 aa).

Residue Tyr38 coordinates L-tyrosine. Positions 43 to 52 (CTAKSLHVGS) match the 'HIGH' region motif. Residues Tyr175 and Gln179 each coordinate L-tyrosine. The 'KMSKS' region signature appears at 235-239 (KMGKT). ATP is bound at residue Lys238. The S4 RNA-binding domain occupies 348–413 (LPIIKLLQIS…CGKKRHLKIM (66 aa)).

The protein belongs to the class-I aminoacyl-tRNA synthetase family. TyrS type 1 subfamily. Homodimer.

It is found in the cytoplasm. The enzyme catalyses tRNA(Tyr) + L-tyrosine + ATP = L-tyrosyl-tRNA(Tyr) + AMP + diphosphate + H(+). In terms of biological role, catalyzes the attachment of tyrosine to tRNA(Tyr) in a two-step reaction: tyrosine is first activated by ATP to form Tyr-AMP and then transferred to the acceptor end of tRNA(Tyr). This chain is Tyrosine--tRNA ligase, found in Ehrlichia canis (strain Jake).